Consider the following 533-residue polypeptide: uncharacterized protein (533 aa).

Residues 1–26 are disordered; sequence MKRFFSKLFSKSPTSGRVPSPDSDYS. Phosphoserine is present on residues serine 20 and serine 23. At tyrosine 25 the chain carries Phosphotyrosine. Serine 26 carries the phosphoserine modification. A run of 10 helical transmembrane segments spans residues 178–198, 213–230, 242–264, 274–296, 313–333, 353–373, 394–414, 435–455, 466–486, and 495–515; these read ILAVLHIPVALIWLNLEHILI, YMRVFILAAPGYAVFEAL, PITYVLCFAAPLNILLNYLLVWH, APVAVATTFWFQSICLILYICFS, LSPMLHFSFHGMLMIVTEWAA, SILLTSTSLLFQIPFAFAVAS, RVAYSLALCISIFDGSLIFCF, IFPILSLFIVTDGLNAVGGGL, GLISIGSSYLFALPVTVFVVV, and IWCGMILSSVTAITCQFTVLF.

This sequence belongs to the multi antimicrobial extrusion (MATE) (TC 2.A.66.1) family.

It localises to the vacuole membrane. This is an uncharacterized protein from Schizosaccharomyces pombe (strain 972 / ATCC 24843) (Fission yeast).